The chain runs to 589 residues: Zinc finger and BTB domain-containing protein 46 (589 aa).

The region spanning 31-99 (CDVCVVVEGK…MYSAHLALTS (69 aa)) is the BTB domain. The segment at 173–330 (RRTSPANSSG…ASSSDSRGER (158 aa)) is disordered. Positions 197–207 (GKEDQEPKADG) are enriched in basic and acidic residues. Residue K229 forms a Glycyl lysine isopeptide (Lys-Gly) (interchain with G-Cter in SUMO2) linkage. Position 234 is a phosphoserine (S234). The span at 305-325 (WPFSSRDSNADLSVTEASSSD) shows a compositional bias: polar residues. 2 C2H2-type zinc fingers span residues 418–436 (FKCP…LKRH) and 446–468 (YPCE…TLVH). The interval 512–589 (PLDHGGGGGE…GPDKDFAWLS (78 aa)) is disordered. Residues 546–570 (EELGEDDEGLAPEDALLADDKDEED) are compositionally biased toward acidic residues.

In terms of processing, sumoylated. Desumoylation by DESI1 reverses transcriptional repression activity.

The protein resides in the nucleus. Functionally, functions as a transcriptional repressor for PRDM1. The sequence is that of Zinc finger and BTB domain-containing protein 46 (ZBTB46) from Homo sapiens (Human).